The chain runs to 211 residues: CASP-like protein 1B1 (211 aa).

The disordered stretch occupies residues 1 to 29 (MDLERGSKTPPSSAPAAAAATTTTSTCCS). Over 1 to 55 (MDLERGSKTPPSSAPAAAAATTTTSTCCSNKRPQLRDRLVALQPVVLRAAATLAT) the chain is Cytoplasmic. The span at 9–26 (TPPSSAPAAAAATTTTST) shows a compositional bias: low complexity. A helical transmembrane segment spans residues 56-76 (AVAAAVMALNAQSYTAVVAIV). At 77-94 (GTRPLTQTFTTKFRDTPA) the chain is on the extracellular side. A helical membrane pass occupies residues 95-115 (FVYFVIANAIAAVYNLVMLLF). The Cytoplasmic portion of the chain corresponds to 116–123 (RCLILRRR). Residues 124 to 144 (MAGLVVHMLDMVIMALLATGA) traverse the membrane as a helical segment. Topologically, residues 145-176 (ATAAAMAELGKNGNVHARWNPICDRFGSFCSR) are extracellular. A helical membrane pass occupies residues 177–197 (GGVALASSFTGVALMLALNLL). The Cytoplasmic portion of the chain corresponds to 198–211 (SAASNAQCSPGQYE).

The protein belongs to the Casparian strip membrane proteins (CASP) family. Homodimer and heterodimers.

The protein localises to the cell membrane. This Sorghum bicolor (Sorghum) protein is CASP-like protein 1B1.